Reading from the N-terminus, the 72-residue chain is DNA-directed RNA polymerase subunit omega (72 aa).

The protein belongs to the RNA polymerase subunit omega family. In terms of assembly, the RNAP catalytic core consists of 2 alpha, 1 beta, 1 beta' and 1 omega subunit. When a sigma factor is associated with the core the holoenzyme is formed, which can initiate transcription.

The catalysed reaction is RNA(n) + a ribonucleoside 5'-triphosphate = RNA(n+1) + diphosphate. Its function is as follows. Promotes RNA polymerase assembly. Latches the N- and C-terminal regions of the beta' subunit thereby facilitating its interaction with the beta and alpha subunits. This Clostridium beijerinckii (strain ATCC 51743 / NCIMB 8052) (Clostridium acetobutylicum) protein is DNA-directed RNA polymerase subunit omega.